Consider the following 198-residue polypeptide: Large ribosomal subunit protein bL25 (198 aa).

Belongs to the bacterial ribosomal protein bL25 family. CTC subfamily. In terms of assembly, part of the 50S ribosomal subunit; part of the 5S rRNA/L5/L18/L25 subcomplex. Contacts the 5S rRNA. Binds to the 5S rRNA independently of L5 and L18.

In terms of biological role, this is one of the proteins that binds to the 5S RNA in the ribosome where it forms part of the central protuberance. This Gloeothece citriformis (strain PCC 7424) (Cyanothece sp. (strain PCC 7424)) protein is Large ribosomal subunit protein bL25.